Consider the following 388-residue polypeptide: Chorismate synthase (388 aa).

NADP(+) contacts are provided by Arg39 and Arg45. Residues 95–118 are disordered; sequence EKNEKSRRVSRPRPGHADLVGGMK. FMN-binding positions include 130 to 132, 251 to 252, Gly296, 311 to 315, and Arg337; these read RSS, NA, and KPIPT.

This sequence belongs to the chorismate synthase family. In terms of assembly, homotetramer. FMNH2 is required as a cofactor.

The catalysed reaction is 5-O-(1-carboxyvinyl)-3-phosphoshikimate = chorismate + phosphate. It functions in the pathway metabolic intermediate biosynthesis; chorismate biosynthesis; chorismate from D-erythrose 4-phosphate and phosphoenolpyruvate: step 7/7. Its function is as follows. Catalyzes the anti-1,4-elimination of the C-3 phosphate and the C-6 proR hydrogen from 5-enolpyruvylshikimate-3-phosphate (EPSP) to yield chorismate, which is the branch point compound that serves as the starting substrate for the three terminal pathways of aromatic amino acid biosynthesis. This reaction introduces a second double bond into the aromatic ring system. This Listeria monocytogenes serotype 4b (strain CLIP80459) protein is Chorismate synthase.